Consider the following 1358-residue polypeptide: DNA-directed RNA polymerase subunit beta (1358 aa).

It belongs to the RNA polymerase beta chain family. As to quaternary structure, the RNAP catalytic core consists of 2 alpha, 1 beta, 1 beta' and 1 omega subunit. When a sigma factor is associated with the core the holoenzyme is formed, which can initiate transcription.

The enzyme catalyses RNA(n) + a ribonucleoside 5'-triphosphate = RNA(n+1) + diphosphate. DNA-dependent RNA polymerase catalyzes the transcription of DNA into RNA using the four ribonucleoside triphosphates as substrates. The chain is DNA-directed RNA polymerase subunit beta from Azotobacter vinelandii (strain DJ / ATCC BAA-1303).